The primary structure comprises 462 residues: Chitinase-like mite allergen Der p 18.0101 (462 aa).

Residues 1–25 (MTRLSFTVLIFLAAYFGSNIRPNVA) form the signal peptide. The GH18 domain occupies 29 to 378 (PKTVCYYESW…HAINSNYFRG (350 aa)). A disulfide bridge links Cys-33 with Cys-58. N-linked (GlcNAc...) asparagine glycosylation is found at Asn-338 and Asn-441. Residues 404–462 (VFHCHQEGFFRDKTYCAKYYECKKGDFGLEQTVHHCPNHSQAFDEVSRTCVDHAKIPGC) enclose the Chitin-binding type-2 domain. Residues Cys-439 and Cys-453 are joined by a disulfide bond.

It belongs to the glycosyl hydrolase 18 family. Chitinase class II subfamily. Expressed in the peritrophic matrix of the midgut, and only very weakly in fecal pellets.

The protein localises to the secreted. Probably a non-catalytic chitinase-like protein, which binds to insoluble chitin and enhances the activity of the catalytic chitinases. Has weak chitin-binding activity. In Dermatophagoides pteronyssinus (European house dust mite), this protein is Chitinase-like mite allergen Der p 18.0101.